Here is a 225-residue protein sequence, read N- to C-terminus: Ribosomal RNA small subunit methyltransferase G (225 aa).

Residues Gly84, Phe89, 107–109, 135–136, and Arg154 each bind S-adenosyl-L-methionine; these read DST and AE.

Belongs to the methyltransferase superfamily. RNA methyltransferase RsmG family.

The protein localises to the cytoplasm. Specifically methylates the N7 position of a guanine in 16S rRNA. This Microcystis aeruginosa (strain NIES-843 / IAM M-2473) protein is Ribosomal RNA small subunit methyltransferase G.